The primary structure comprises 337 residues: Glyceraldehyde-3-phosphate dehydrogenase 2, cytosolic (337 aa).

The tract at residues 1–151 (MGKIKIGING…YTSDVNIVSN (151 aa)) is binding to NAD. Residues 13-14 (RI), aspartate 35, and arginine 82 contribute to the NAD(+) site. The interval 152-337 (ASCTTNCLAP…DLIRHMFKTQ (186 aa)) is catalytic. D-glyceraldehyde 3-phosphate-binding positions include 153–155 (SCT), threonine 184, 213–214 (TG), and arginine 236. Residue cysteine 154 is the Nucleophile of the active site. Asparagine 318 lines the NAD(+) pocket.

Belongs to the glyceraldehyde-3-phosphate dehydrogenase family. Homotetramer. In terms of tissue distribution, developing seeds, seedling roots and shoots, and embryo.

The protein resides in the cytoplasm. The catalysed reaction is D-glyceraldehyde 3-phosphate + phosphate + NAD(+) = (2R)-3-phospho-glyceroyl phosphate + NADH + H(+). Its pathway is carbohydrate degradation; glycolysis; pyruvate from D-glyceraldehyde 3-phosphate: step 1/5. Functionally, key enzyme in glycolysis that catalyzes the first step of the pathway by converting D-glyceraldehyde 3-phosphate (G3P) into 3-phospho-D-glyceroyl phosphate. Essential for the maintenance of cellular ATP levels and carbohydrate metabolism. This Zea mays (Maize) protein is Glyceraldehyde-3-phosphate dehydrogenase 2, cytosolic (GAPC2).